The primary structure comprises 189 residues: Prophage DNA-packing protein NohA (189 aa).

It belongs to the terminase small subunit family.

The protein is Prophage DNA-packing protein NohA (nohA) of Escherichia coli (strain K12).